A 170-amino-acid polypeptide reads, in one-letter code: Large ribosomal subunit protein uL10 (170 aa).

Belongs to the universal ribosomal protein uL10 family. In terms of assembly, part of the ribosomal stalk of the 50S ribosomal subunit. The N-terminus interacts with L11 and the large rRNA to form the base of the stalk. The C-terminus forms an elongated spine to which L12 dimers bind in a sequential fashion forming a multimeric L10(L12)X complex.

Its function is as follows. Forms part of the ribosomal stalk, playing a central role in the interaction of the ribosome with GTP-bound translation factors. In Lactobacillus helveticus (strain DPC 4571), this protein is Large ribosomal subunit protein uL10.